A 467-amino-acid polypeptide reads, in one-letter code: Probable amino acid permease 7 (467 aa).

Topologically, residues 1–29 (MDIKEDDESRVITPTELQLHDSVTARTGT) are cytoplasmic. The helical transmembrane segment at 30 to 50 (LWTAVAHIITGVIGAGVLSLA) threads the bilayer. Residues 51-58 (WATAELGW) are Extracellular-facing. Residues 59–79 (IAGPAALIAFAGVTLLSAFLL) traverse the membrane as a helical segment. Topologically, residues 80-111 (SDCYRFPDPNNGPLRLNSYSQAVKLYLGKKNE) are cytoplasmic. A helical transmembrane segment spans residues 112–132 (IVCGVVVYISLFGCGIAYTIV). Residues 133-163 (IATCSRAIMKSNCYHRNGHNATCSYGDNNNY) lie on the Extracellular side of the membrane. The next 2 membrane-spanning stretches (helical) occupy residues 164–184 (FMVL…FHNM) and 185–205 (VWLS…GIGL). Over 206–231 (ALGKIIENRKIEGSIRGIPAENRGEK) the chain is Extracellular. The chain crosses the membrane as a helical span at residues 232–252 (VWIVFQALGNIAFSYPFSIIL). The Cytoplasmic segment spans residues 253 to 274 (LEIQDTLRSPPAEKQTMKKAST). Residues 275–295 (VAVFIQTFFFFCCGCFGYAAF) traverse the membrane as a helical segment. Residues 296–312 (GDSTPGNLLTGFGFYEP) are Extracellular-facing. The chain crosses the membrane as a helical span at residues 313–333 (FWLVDFANACIVLHLVGGYQV). Residues 334 to 383 (YSQPIFAAAERSLTKKYPENKFIARFYGFKLPLLRGETVRLNPMRMCLRT) are Cytoplasmic-facing. Helical transmembrane passes span 384–404 (MYVL…EVLG) and 405–425 (VVGA…MCIL). Residues 426–443 (QKKIRSWTRPWLLLRGFS) lie on the Cytoplasmic side of the membrane. Residues 444 to 464 (FVCLLVCLLSLVGSIYGLVGA) traverse the membrane as a helical segment. At 465 to 467 (KFG) the chain is on the extracellular side.

Belongs to the amino acid/polyamine transporter 2 family. Amino acid/auxin permease (AAAP) (TC 2.A.18.2) subfamily.

The protein resides in the cell membrane. In terms of biological role, amino acid-proton symporter. Stereospecific transporter with a broad specificity for neutral amino acids. This chain is Probable amino acid permease 7 (AAP7), found in Arabidopsis thaliana (Mouse-ear cress).